The following is a 427-amino-acid chain: Glutamate-1-semialdehyde 2,1-aminomutase (427 aa).

Lysine 267 is modified (N6-(pyridoxal phosphate)lysine).

This sequence belongs to the class-III pyridoxal-phosphate-dependent aminotransferase family. HemL subfamily. As to quaternary structure, homodimer. Pyridoxal 5'-phosphate is required as a cofactor.

It is found in the cytoplasm. It catalyses the reaction (S)-4-amino-5-oxopentanoate = 5-aminolevulinate. The protein operates within porphyrin-containing compound metabolism; protoporphyrin-IX biosynthesis; 5-aminolevulinate from L-glutamyl-tRNA(Glu): step 2/2. In Syntrophotalea carbinolica (strain DSM 2380 / NBRC 103641 / GraBd1) (Pelobacter carbinolicus), this protein is Glutamate-1-semialdehyde 2,1-aminomutase.